A 297-amino-acid polypeptide reads, in one-letter code: tRNA dimethylallyltransferase (297 aa).

ATP is bound at residue 10 to 17 (GITASGKS). Substrate is bound at residue 12-17 (TASGKS). The interval 36 to 39 (DSKQ) is interaction with substrate tRNA.

It belongs to the IPP transferase family. In terms of assembly, monomer. Requires Mg(2+) as cofactor.

The catalysed reaction is adenosine(37) in tRNA + dimethylallyl diphosphate = N(6)-dimethylallyladenosine(37) in tRNA + diphosphate. In terms of biological role, catalyzes the transfer of a dimethylallyl group onto the adenine at position 37 in tRNAs that read codons beginning with uridine, leading to the formation of N6-(dimethylallyl)adenosine (i(6)A). The polypeptide is tRNA dimethylallyltransferase (Wolbachia pipientis wMel).